Reading from the N-terminus, the 336-residue chain is Adenylate isopentenyltransferase 3, chloroplastic (336 aa).

The transit peptide at 1–55 (MIMKISMAMCKQPLPPSPTLDFPPARFGPNMLTLNPYGPKDKVVVIMGATGTGKS) directs the protein to the chloroplast. Residue 48–55 (GATGTGKS) coordinates ATP. Residue Cys333 is modified to Cysteine methyl ester. Cys333 carries S-farnesyl cysteine lipidation. Positions 334 to 336 (LVA) are cleaved as a propeptide — removed in mature form.

It belongs to the IPP transferase family. Post-translationally, farnesylated. Expressed the phloem companion cells.

The protein resides in the plastid. The protein localises to the chloroplast. It is found in the nucleus membrane. Its subcellular location is the cytoplasm. It catalyses the reaction dimethylallyl diphosphate + ADP = N(6)-(dimethylallyl)adenosine 5'-diphosphate + diphosphate. It carries out the reaction dimethylallyl diphosphate + ATP = N(6)-(dimethylallyl)adenosine 5'-triphosphate + diphosphate. Functionally, involved in cytokinin biosynthesis. Catalyzes the transfer of an isopentenyl group from dimethylallyl diphosphate (DMAPP) to ATP and ADP. This chain is Adenylate isopentenyltransferase 3, chloroplastic (IPT3), found in Arabidopsis thaliana (Mouse-ear cress).